Here is a 477-residue protein sequence, read N- to C-terminus: 3-isopropylmalate dehydratase large subunit (477 aa).

Residues C352, C413, and C416 each coordinate [4Fe-4S] cluster.

It belongs to the aconitase/IPM isomerase family. LeuC type 1 subfamily. As to quaternary structure, heterodimer of LeuC and LeuD. [4Fe-4S] cluster is required as a cofactor.

It carries out the reaction (2R,3S)-3-isopropylmalate = (2S)-2-isopropylmalate. It participates in amino-acid biosynthesis; L-leucine biosynthesis; L-leucine from 3-methyl-2-oxobutanoate: step 2/4. In terms of biological role, catalyzes the isomerization between 2-isopropylmalate and 3-isopropylmalate, via the formation of 2-isopropylmaleate. The chain is 3-isopropylmalate dehydratase large subunit from Pseudomonas putida (strain GB-1).